The sequence spans 1482 residues: Chromosome partition protein MukB (1482 aa).

Gly34 to Ser41 is a binding site for ATP. Coiled coils occupy residues Leu337–Gln418, Leu444–His472, Arg509–Ala601, Ala781–Ser805, Glu835–Gly1116, and Glu1210–Val1265. A flexible hinge region spans residues Pro666–Arg783. Residues Ala1049–Gln1077 form a disordered region. Residues Ala1051–Thr1066 show a composition bias toward basic and acidic residues.

This sequence belongs to the SMC family. MukB subfamily. As to quaternary structure, homodimerization via its hinge domain. Binds to DNA via its C-terminal region. Interacts, and probably forms a ternary complex, with MukE and MukF via its C-terminal region. The complex formation is stimulated by calcium or magnesium. Interacts with tubulin-related protein FtsZ.

It is found in the cytoplasm. It localises to the nucleoid. Functionally, plays a central role in chromosome condensation, segregation and cell cycle progression. Functions as a homodimer, which is essential for chromosome partition. Involved in negative DNA supercoiling in vivo, and by this means organize and compact chromosomes. May achieve or facilitate chromosome segregation by condensation DNA from both sides of a centrally located replisome during cell division. This Cronobacter sakazakii (strain ATCC BAA-894) (Enterobacter sakazakii) protein is Chromosome partition protein MukB.